A 416-amino-acid chain; its full sequence is Splicing factor U2AF 50 kDa subunit (416 aa).

Residues 1 to 10 (MGYDDRERDR) show a composition bias toward basic and acidic residues. A disordered region spans residues 1–47 (MGYDDRERDRERRRHRSRSRDRHRERSRDRRHHRNSRRKPSLYWDVP). Basic residues-rich tracts occupy residues 11-21 (ERRRHRSRSRD) and 29-40 (DRRHHRNSRRKP). 3 RRM domains span residues 93–175 (RRLY…RPHD), 207–285 (HKIF…RASV), and 318–408 (EVLC…YFDP).

This sequence belongs to the splicing factor SR family. In terms of assembly, forms a heterodimer with the U2AF small subunit.

The protein localises to the nucleus. Necessary for the splicing of pre-mRNA. Binds to the polypyrimidine tract of introns early during spliceosome assembly. The sequence is that of Splicing factor U2AF 50 kDa subunit (U2af50) from Drosophila melanogaster (Fruit fly).